The following is a 477-amino-acid chain: Cysteine--tRNA ligase (477 aa).

Cysteine 29 is a Zn(2+) binding site. The 'HIGH' region motif lies at 31-41 (PTVQASPHIGH). Zn(2+) is bound by residues cysteine 219, histidine 244, and glutamate 248. Residues 275 to 279 (KMSKS) carry the 'KMSKS' region motif. Lysine 278 lines the ATP pocket.

Belongs to the class-I aminoacyl-tRNA synthetase family. In terms of assembly, monomer. Requires Zn(2+) as cofactor.

It localises to the cytoplasm. It catalyses the reaction tRNA(Cys) + L-cysteine + ATP = L-cysteinyl-tRNA(Cys) + AMP + diphosphate. In Leifsonia xyli subsp. xyli (strain CTCB07), this protein is Cysteine--tRNA ligase.